Consider the following 449-residue polypeptide: Putative F-box/LRR-repeat protein 23 (449 aa).

LRR repeat units lie at residues 14-37 and 39-64; these read KLWRYDDEPLAIAETMPELRHLKL and GNGLTNLRLEAILDNCVHLVHLDLRR. The 48-residue stretch at 178-225 folds into the F-box domain; sequence LRNWAELPSKLTSSILLRLGAIEILQNAQKVCKPWHRVCKDPSMWRKI. 6 LRR repeats span residues 261-286, 287-311, 312-337, 344-367, 369-394, and 401-427; these read WYYGTNDLIMYIADRSSNLKSLGLVR, CFPITDEGVAKAVSKVPLLEYLEVS, YCLFSGESLRDIGRSCPNLKTLKLNR, SNSGFDDNAKAIAESMPELRHLQL, GNGLTNKGLNAILDGCPHLEHLDLRQ, and VGDLKKRCFERIKDLRCPNDSDDDSDD.

The chain is Putative F-box/LRR-repeat protein 23 (FBL23) from Arabidopsis thaliana (Mouse-ear cress).